We begin with the raw amino-acid sequence, 445 residues long: Trigger factor (445 aa).

A PPIase FKBP-type domain is found at 166-251; it reads GDVVVVDFVG…AKALKRPVDV (86 aa).

It belongs to the FKBP-type PPIase family. Tig subfamily.

It is found in the cytoplasm. The catalysed reaction is [protein]-peptidylproline (omega=180) = [protein]-peptidylproline (omega=0). Involved in protein export. Acts as a chaperone by maintaining the newly synthesized protein in an open conformation. Functions as a peptidyl-prolyl cis-trans isomerase. The chain is Trigger factor from Gluconacetobacter diazotrophicus (strain ATCC 49037 / DSM 5601 / CCUG 37298 / CIP 103539 / LMG 7603 / PAl5).